Consider the following 395-residue polypeptide: HORMA domain-containing protein 1 (395 aa).

Positions 24-226 (QQSLVLVKRL…TPFHTFKVKV (203 aa)) constitute an HORMA domain. Residues 329–395 (DVSESKTRSG…RKFSEPKEYV (67 aa)) form a disordered region. The segment covering 344-353 (KMANGNQPVK) has biased composition (polar residues). Basic and acidic residues predominate over residues 354–363 (SSKENRKRNQ). Position 377 is a phosphoserine (Ser-377). Positions 384–387 (KRRK) match the Nuclear localization signal motif.

Interacts with HORMAD2. Interacts with IHO1. In terms of processing, phosphorylated at Ser-378 in a SPO11-dependent manner.

Its subcellular location is the nucleus. The protein resides in the chromosome. Its function is as follows. Plays a key role in meiotic progression. Regulates 3 different functions during meiosis: ensures that sufficient numbers of processed DNA double-strand breaks (DSBs) are available for successful homology search by increasing the steady-state numbers of single-stranded DSB ends. Promotes synaptonemal-complex formation independently of its role in homology search. Plays a key role in the male mid-pachytene checkpoint and the female meiotic prophase checkpoint: required for efficient build-up of ATR activity on unsynapsed chromosome regions, a process believed to form the basis of meiotic silencing of unsynapsed chromatin (MSUC) and meiotic prophase quality control in both sexes. The chain is HORMA domain-containing protein 1 (HORMAD1) from Canis lupus familiaris (Dog).